Here is an 827-residue protein sequence, read N- to C-terminus: Multiphosphoryl transfer protein (827 aa).

The PTS EIIA type-2 domain occupies 2 to 142; it reads IPLTSELVAI…AVIVARLTGA (141 aa). Histidine 62 serves as the catalytic Tele-phosphohistidine intermediate; for EIIA activity. Phosphohistidine; by HPr is present on histidine 62. Residues 157-245 form the HPr domain; sequence AQGIDVVVTG…AFEAGLEDEE (89 aa). Histidine 171 serves as the catalytic Pros-phosphohistidine intermediate; for HPr activity. Histidine 171 carries the post-translational modification Phosphohistidine; by EI. Positions 270 to 827 are PTS EI; that stretch reads EGRTLVGISS…TTAAEVRGLK (558 aa). Histidine 457 (tele-phosphohistidine intermediate; for PTS EI activity) is an active-site residue. The residue at position 457 (histidine 457) is a Phosphohistidine; by autocatalysis. Residues arginine 564 and arginine 600 each contribute to the phosphoenolpyruvate site. Mg(2+)-binding residues include glutamate 693 and aspartate 717. Phosphoenolpyruvate is bound by residues 716–717 and arginine 727; that span reads ND. Cysteine 764 acts as the Proton donor in catalysis.

The protein belongs to the PEP-utilizing enzyme family. Mg(2+) is required as a cofactor.

Its subcellular location is the cytoplasm. It catalyses the reaction L-histidyl-[protein] + phosphoenolpyruvate = N(pros)-phospho-L-histidyl-[protein] + pyruvate. The phosphoenolpyruvate-dependent sugar phosphotransferase system (sugar PTS), a major carbohydrate active transport system, catalyzes the phosphorylation of incoming sugar substrates concomitantly with their translocation across the cell membrane. The enzyme II FruAB PTS system is involved in fructose transport. The polypeptide is Multiphosphoryl transfer protein (Rhodobacter capsulatus (Rhodopseudomonas capsulata)).